The chain runs to 338 residues: Dodecaprenyl-phosphate galacturonate synthase (338 aa).

2 consecutive transmembrane segments (helical) span residues 254–274 (FFGS…LYLG) and 289–309 (MLMV…TGIL).

This sequence belongs to the glycosyltransferase 2 family.

It localises to the cell membrane. It catalyses the reaction di-trans,nona-cis-dodecaprenyl phosphate + UDP-alpha-D-galacturonate = beta-D-galacturonosyl di-trans,nona-cis-dodecaprenyl phosphate + UDP. In terms of biological role, glycosyltransferase that catalyzes the synthesis of dodecaprenyl-phosphate galacturonate (Dod-P-GalA), likely from UDP-GalA and dodecaprenyl-phosphate. Dod-P-GalA is the lipid donor required for GalA transfer to lipopolysaccharide (LPS) specific residues catalyzed by the GalA transferases RgtA, RgtB, RgtC and RgtD. This is Dodecaprenyl-phosphate galacturonate synthase from Rhizobium johnstonii (strain DSM 114642 / LMG 32736 / 3841) (Rhizobium leguminosarum bv. viciae).